We begin with the raw amino-acid sequence, 792 residues long: Ribonucleoside-diphosphate reductase large subunit (792 aa).

Residues 1–92 (MHVIKRDGRQ…VSNLHKETKK (92 aa)) enclose the ATP-cone domain. Residues 5 to 6 (KR), 11 to 17 (ERVMFDK), threonine 53, and aspartate 57 each bind ATP. Lysine 17 is modified (N6-acetyllysine). GDP-binding residues include serine 202 and serine 217. A disulfide bridge links cysteine 218 with cysteine 444. Residues 226–228 (DSI), lysine 243, arginine 256, and 263–264 (AG) contribute to the dTTP site. Lysine 376 carries the N6-acetyllysine modification. Asparagine 427 is a GDP binding site. The active-site Proton acceptor is the asparagine 427. Residue cysteine 429 is the Cysteine radical intermediate of the active site. GDP is bound by residues glutamate 431 and 604–607 (TAST). The active-site Proton acceptor is glutamate 431. Threonine 751 is subject to Phosphothreonine.

Belongs to the ribonucleoside diphosphate reductase large chain family. As to quaternary structure, heterodimer of a large and a small subunit. Heterodimer with small subunit RRM2 or RRM2B. The heterodimer with RRM2 has higher catalytic activity than the heterodimer with RRM2B. Interacts with AHCYL1 which inhibits its activity.

The protein localises to the cytoplasm. It catalyses the reaction a 2'-deoxyribonucleoside 5'-diphosphate + [thioredoxin]-disulfide + H2O = a ribonucleoside 5'-diphosphate + [thioredoxin]-dithiol. Its activity is regulated as follows. Under complex allosteric control mediated by deoxynucleoside triphosphates and ATP binding to separate specificity and activation sites on the M1 subunit. The type of nucleotide bound at the specificity site determines substrate preference. It seems probable that ATP makes the enzyme reduce CDP and UDP, dGTP favors ADP reduction and dTTP favors GDP reduction. Stimulated by ATP and inhibited by dATP binding to the activity site, the dATP inhibition is mediated by AHCYL1 which stabilizes dATP in the site. Functionally, provides the precursors necessary for DNA synthesis. Catalyzes the biosynthesis of deoxyribonucleotides from the corresponding ribonucleotides. This chain is Ribonucleoside-diphosphate reductase large subunit (RRM1), found in Homo sapiens (Human).